Here is a 252-residue protein sequence, read N- to C-terminus: 2-succinyl-6-hydroxy-2,4-cyclohexadiene-1-carboxylate synthase (252 aa).

This sequence belongs to the AB hydrolase superfamily. MenH family. In terms of assembly, monomer.

The catalysed reaction is 5-enolpyruvoyl-6-hydroxy-2-succinyl-cyclohex-3-ene-1-carboxylate = (1R,6R)-6-hydroxy-2-succinyl-cyclohexa-2,4-diene-1-carboxylate + pyruvate. It functions in the pathway quinol/quinone metabolism; 1,4-dihydroxy-2-naphthoate biosynthesis; 1,4-dihydroxy-2-naphthoate from chorismate: step 3/7. It participates in quinol/quinone metabolism; menaquinone biosynthesis. Its function is as follows. Catalyzes a proton abstraction reaction that results in 2,5-elimination of pyruvate from 2-succinyl-5-enolpyruvyl-6-hydroxy-3-cyclohexene-1-carboxylate (SEPHCHC) and the formation of 2-succinyl-6-hydroxy-2,4-cyclohexadiene-1-carboxylate (SHCHC). This Citrobacter koseri (strain ATCC BAA-895 / CDC 4225-83 / SGSC4696) protein is 2-succinyl-6-hydroxy-2,4-cyclohexadiene-1-carboxylate synthase.